Consider the following 628-residue polypeptide: tRNA uridine 5-carboxymethylaminomethyl modification enzyme MnmG (628 aa).

Position 13–18 (13–18) interacts with FAD; sequence GAGHAG. 273 to 287 is an NAD(+) binding site; that stretch reads GPRYCPSIEDKIVRF.

It belongs to the MnmG family. As to quaternary structure, homodimer. Heterotetramer of two MnmE and two MnmG subunits. It depends on FAD as a cofactor.

It localises to the cytoplasm. Functionally, NAD-binding protein involved in the addition of a carboxymethylaminomethyl (cmnm) group at the wobble position (U34) of certain tRNAs, forming tRNA-cmnm(5)s(2)U34. The sequence is that of tRNA uridine 5-carboxymethylaminomethyl modification enzyme MnmG from Buchnera aphidicola subsp. Acyrthosiphon pisum (strain Tuc7).